Consider the following 159-residue polypeptide: MVPAAGQLALLALGILVAVCQALENSTSPLSDSPVAAAVVSHFNKCPDSHTQYCFHGTCRFLVQEEKPACVCHSGYVGVRCEHADLLAVVAASQKKQAITALVVVSIVALAVLIITCVLIHCCQVRKHCEWCRALVCRHEKPSALLKGRTACCHSETVV.

An N-terminal signal peptide occupies residues 1 to 23; sequence MVPAAGQLALLALGILVAVCQAL. The propeptide at 24 to 38 is removed in mature form; that stretch reads ENSTSPLSDSPVAAA. Over 24–97 the chain is Extracellular; it reads ENSTSPLSDS…AVVAASQKKQ (74 aa). Asparagine 25 carries N-linked (GlcNAc...) asparagine glycosylation. The EGF-like domain occupies 42 to 82; sequence HFNKCPDSHTQYCFHGTCRFLVQEEKPACVCHSGYVGVRCE. 3 disulfide bridges follow: cysteine 46–cysteine 59, cysteine 54–cysteine 70, and cysteine 72–cysteine 81. The propeptide at 89 to 159 is removed in mature form; the sequence is VVAASQKKQA…TACCHSETVV (71 aa). The chain crosses the membrane as a helical span at residues 98–123; sequence AITALVVVSIVALAVLIITCVLIHCC. At 124–159 the chain is on the cytoplasmic side; the sequence is QVRKHCEWCRALVCRHEKPSALLKGRTACCHSETVV. Residues cysteine 152 and cysteine 153 are each lipidated (S-palmitoyl cysteine).

As to quaternary structure, interacts with the PDZ domains of MAGI3, SDCBP and SNTA1. The interaction with SDCBP, is required for the targeting to the cell surface. In the endoplasmic reticulum, in its immature form (i.e. with a prosegment and lacking full N-glycosylation), interacts with CNIH. In the Golgi apparatus, may form a complex with CNIH and GORASP2. Interacts (via cytoplasmic C-terminal domain) with NKD2.

The protein resides in the secreted. The protein localises to the extracellular space. It is found in the cell membrane. TGF alpha is a mitogenic polypeptide that is able to bind to the EGF receptor/EGFR and to act synergistically with TGF beta to promote anchorage-independent cell proliferation in soft agar. The sequence is that of Protransforming growth factor alpha (Tgfa) from Rattus norvegicus (Rat).